The chain runs to 75 residues: Small ribosomal subunit protein bS18 (75 aa).

It belongs to the bacterial ribosomal protein bS18 family. In terms of assembly, part of the 30S ribosomal subunit. Forms a tight heterodimer with protein bS6.

Binds as a heterodimer with protein bS6 to the central domain of the 16S rRNA, where it helps stabilize the platform of the 30S subunit. This chain is Small ribosomal subunit protein bS18, found in Alteromonas mediterranea (strain DSM 17117 / CIP 110805 / LMG 28347 / Deep ecotype).